The following is a 356-amino-acid chain: UDP-N-acetylglucosamine--N-acetylmuramyl-(pentapeptide) pyrophosphoryl-undecaprenol N-acetylglucosamine transferase (356 aa).

UDP-N-acetyl-alpha-D-glucosamine is bound by residues 12–14, Asn124, Arg163, Ser188, Ile242, and Gln287; that span reads TGG.

Belongs to the glycosyltransferase 28 family. MurG subfamily.

The protein resides in the cell inner membrane. It carries out the reaction di-trans,octa-cis-undecaprenyl diphospho-N-acetyl-alpha-D-muramoyl-L-alanyl-D-glutamyl-meso-2,6-diaminopimeloyl-D-alanyl-D-alanine + UDP-N-acetyl-alpha-D-glucosamine = di-trans,octa-cis-undecaprenyl diphospho-[N-acetyl-alpha-D-glucosaminyl-(1-&gt;4)]-N-acetyl-alpha-D-muramoyl-L-alanyl-D-glutamyl-meso-2,6-diaminopimeloyl-D-alanyl-D-alanine + UDP + H(+). It functions in the pathway cell wall biogenesis; peptidoglycan biosynthesis. Functionally, cell wall formation. Catalyzes the transfer of a GlcNAc subunit on undecaprenyl-pyrophosphoryl-MurNAc-pentapeptide (lipid intermediate I) to form undecaprenyl-pyrophosphoryl-MurNAc-(pentapeptide)GlcNAc (lipid intermediate II). The sequence is that of UDP-N-acetylglucosamine--N-acetylmuramyl-(pentapeptide) pyrophosphoryl-undecaprenol N-acetylglucosamine transferase from Pseudomonas syringae pv. syringae (strain B728a).